The primary structure comprises 819 residues: Leucine--tRNA ligase (819 aa).

Positions 42-53 match the 'HIGH' region motif; it reads PYPSGAKLHIGH. The 'KMSKS' region motif lies at 578-582; that stretch reads RMSKS. Lys581 is an ATP binding site.

This sequence belongs to the class-I aminoacyl-tRNA synthetase family.

It localises to the cytoplasm. The catalysed reaction is tRNA(Leu) + L-leucine + ATP = L-leucyl-tRNA(Leu) + AMP + diphosphate. The sequence is that of Leucine--tRNA ligase from Caldanaerobacter subterraneus subsp. tengcongensis (strain DSM 15242 / JCM 11007 / NBRC 100824 / MB4) (Thermoanaerobacter tengcongensis).